A 164-amino-acid chain; its full sequence is Phosphopantetheine adenylyltransferase (164 aa).

Residue T10 coordinates substrate. ATP contacts are provided by residues 10–11 (TF) and H18. 3 residues coordinate substrate: K42, L74, and R88. Residues 89 to 91 (GIR), E99, and 124 to 130 (YAFVSST) each bind ATP.

It belongs to the bacterial CoaD family. In terms of assembly, homohexamer. Requires Mg(2+) as cofactor.

It is found in the cytoplasm. It catalyses the reaction (R)-4'-phosphopantetheine + ATP + H(+) = 3'-dephospho-CoA + diphosphate. Its pathway is cofactor biosynthesis; coenzyme A biosynthesis; CoA from (R)-pantothenate: step 4/5. Reversibly transfers an adenylyl group from ATP to 4'-phosphopantetheine, yielding dephospho-CoA (dPCoA) and pyrophosphate. The chain is Phosphopantetheine adenylyltransferase from Tolumonas auensis (strain DSM 9187 / NBRC 110442 / TA 4).